Here is a 1881-residue protein sequence, read N- to C-terminus: Ankyrin-1 (1881 aa).

The interval 1 to 827 (MPYSVGFREA…EDEGEELISF (827 aa)) is 89 kDa domain. ANK repeat units follow at residues 44-73 (NGLN…ILET), 77-106 (KGNT…NVNA), 110-139 (KGFT…NQNV), 143-172 (DGFT…KGKV), 174-201 (LPAL…NPDV), 205-234 (TGFT…SVNF), 238-267 (NGIT…QIET), 271-300 (DELT…PIQA), 304-333 (NGLS…EIDD), 337-366 (DHLT…KPNS), 370-399 (NGFT…SIDA), 403-432 (SGLT…SPNV), 436-465 (KVET…KVNA), 469-498 (DDQT…NPNL), 502-531 (AGHT…SQAC), 535-564 (KGFT…HPNA), 568-597 (NGLT…SPHS), 601-630 (NGYT…SANA), 634-663 (QGVT…NGNL), 667-696 (SGLT…MVDA), 700-729 (MGYT…DVNA), 733-762 (LGYS…SPNE), and 766-795 (DGTT…ETSF). At Asn105 the chain carries (3S)-3-hydroxyasparagine; by HIF1AN; partial. Asn233 carries the (3S)-3-hydroxyasparagine; by HIF1AN; partial modification. At Ser429 the chain carries Phosphoserine. Asn431 and Asn464 each carry (3S)-3-hydroxyasparagine; by HIF1AN; partial. (3S)-3-hydroxyasparagine; by HIF1AN; partial is present on residues Asn629 and Asn662. Asp695 is subject to (3S)-3-hydroxyaspartate; by HIF1AN; partial. Asn728 is subject to (3S)-3-hydroxyasparagine; by HIF1AN; partial. The residue at position 759 (Ser759) is a Phosphoserine. Asn761 is subject to (3S)-3-hydroxyasparagine; by HIF1AN; partial. Phosphoserine is present on residues Ser781, Ser817, Ser834, and Ser856. The tract at residues 875 to 904 (EEQEQASKEYDEDSLIPSSPATETSDNISP) is disordered. Residues 890-904 (IPSSPATETSDNISP) show a composition bias toward polar residues. ZU5 domains follow at residues 913 to 1068 (FLVS…IMSR) and 1070 to 1216 (CQDY…LSDC). A Phosphothreonine modification is found at Thr961. The residue at position 1073 (Tyr1073) is a Phosphotyrosine. A Phosphoserine modification is found at Ser1082. Residues 1234 to 1362 (TAVPYMAKFV…QHILCHLNIT (129 aa)) form a UPA domain region. Thr1378 and Thr1380 each carry phosphothreonine. Positions 1383–1881 (ALRYSILSES…SKDHTSTPNP (499 aa)) are 55 kDa regulatory domain. A phosphoserine mark is found at Ser1390, Ser1392, and Ser1396. The residue at position 1400 (Thr1400) is a Phosphothreonine. The region spanning 1403 to 1487 (AEMKMAVISE…EIVNMLEGSG (85 aa)) is the Death domain. Phosphoserine occurs at positions 1428 and 1486. The interval 1486 to 1510 (SGRQSRNLKPDRRHTDRDYSLSPSQ) is disordered. Positions 1493 to 1504 (LKPDRRHTDRDY) are enriched in basic and acidic residues. Phosphoserine is present on residues Ser1523 and Ser1533. The interval 1583–1613 (SSLECSKAEDSDATGHEWKLEGALSEEPRGP) is disordered. Basic and acidic residues predominate over residues 1588 to 1612 (SKAEDSDATGHEWKLEGALSEEPRG). Residue Ser1617 is modified to Phosphoserine. 3 disordered regions span residues 1637-1703 (LLEQ…LQDW), 1718-1791 (QGSW…EAKN), and 1840-1859 (ADAA…EDPS). The span at 1642-1658 (EGQRSEEKLPGSKRQDD) shows a compositional bias: basic and acidic residues. 5 positions are modified to phosphoserine: Ser1666, Ser1671, Ser1686, Ser1690, and Ser1696. Positions 1683 to 1694 (ITHSPTVSQVTE) are enriched in polar residues. Composition is skewed to polar residues over residues 1718–1739 (QGSW…STMT) and 1758–1771 (SEHT…AESS). Positions 1772–1781 (QADRDRRQQG) are enriched in basic and acidic residues.

Component of the ankyrin-1 complex in the erythrocyte, composed of ANK1, RHCE, RHAG, SLC4A1, EPB42, GYPA, GYPB and AQP1. Interacts with a number of integral membrane proteins and cytoskeletal proteins. Interacts (via N-terminus) with SPTB/spectrin (beta chain). Also interacts with TTN/titin. Isoform Mu17 interacts with OBSCN isoform 3/obscurin. Interacts with HIF1AN. Interacts (via ANK 1-5 repeats) with RHCE; this interaction mediates the primary membrane attachment site for ANK1. Interacts (via ANK 1-2 repeats) with AQP1 (via the N-terminal). Interacts (via ANK 1-13 repeats) with EPB42. Interacts directly with SLC4A1 (via the cytoplasmic domain); this interaction is mediated by the SLC4A1 Band 3-II and Band 3-III dimers. In terms of processing, regulated by phosphorylation. Post-translationally, palmitoylated. Hydroxylated by HIF1AN at several asparagine and 1 aspartate residue within ANK repeat region. Hydroxylation seems to increase the conformational stability of this region and may also modulate protein-protein interactions mediated by the ANK repeat region. In terms of processing, (Microbial infection) Probably cleaved by P.falciparum SERA6; the cleavage probably causes the disruption of the actin cytoskeleton and the rupture of the erythrocyte cell membrane releasing the merozoites. In terms of tissue distribution, isoform Mu17, isoform Mu18, isoform Mu19 and isoform Mu20 are expressed in skeletal muscle. Isoform Br21 is expressed in brain.

The protein resides in the cytoplasm. Its subcellular location is the cytoskeleton. The protein localises to the membrane. It is found in the myofibril. It localises to the sarcomere. The protein resides in the m line. Its subcellular location is the sarcoplasmic reticulum. Functionally, component of the ankyrin-1 complex, a multiprotein complex involved in the stability and shape of the erythrocyte membrane. Attaches integral membrane proteins to cytoskeletal elements; binds to the erythrocyte membrane protein band 4.2, to Na-K ATPase, to the lymphocyte membrane protein GP85, and to the cytoskeletal proteins fodrin, tubulin, vimentin and desmin. Erythrocyte ankyrins also link spectrin (beta chain) to the cytoplasmic domain of the erythrocytes anion exchange protein; they retain most or all of these binding functions. In terms of biological role, together with obscurin in skeletal muscle may provide a molecular link between the sarcoplasmic reticulum and myofibrils. This Homo sapiens (Human) protein is Ankyrin-1.